A 158-amino-acid chain; its full sequence is NAD(P)H-quinone oxidoreductase subunit J, chloroplastic (158 aa).

The protein belongs to the complex I 30 kDa subunit family. In terms of assembly, NDH is composed of at least 16 different subunits, 5 of which are encoded in the nucleus.

It is found in the plastid. It localises to the chloroplast thylakoid membrane. The catalysed reaction is a plastoquinone + NADH + (n+1) H(+)(in) = a plastoquinol + NAD(+) + n H(+)(out). The enzyme catalyses a plastoquinone + NADPH + (n+1) H(+)(in) = a plastoquinol + NADP(+) + n H(+)(out). Its function is as follows. NDH shuttles electrons from NAD(P)H:plastoquinone, via FMN and iron-sulfur (Fe-S) centers, to quinones in the photosynthetic chain and possibly in a chloroplast respiratory chain. The immediate electron acceptor for the enzyme in this species is believed to be plastoquinone. Couples the redox reaction to proton translocation, and thus conserves the redox energy in a proton gradient. This chain is NAD(P)H-quinone oxidoreductase subunit J, chloroplastic, found in Gossypium barbadense (Sea Island cotton).